The sequence spans 423 residues: 26S proteasome regulatory subunit 6A homolog B (423 aa).

At serine 18 the chain carries Phosphoserine. 211-218 provides a ligand contact to ATP; the sequence is GPPGTGKT. Residues lysine 234, lysine 278, and lysine 415 each participate in a glycyl lysine isopeptide (Lys-Gly) (interchain with G-Cter in ubiquitin) cross-link.

This sequence belongs to the AAA ATPase family. In terms of assembly, component of the 19S regulatory particle (RP/PA700) base subcomplex of the 26S proteasome. The 26S proteasome is composed of a core protease (CP), known as the 20S proteasome, capped at one or both ends by the 19S regulatory particle (RP/PA700). The RP/PA700 complex is composed of at least 17 different subunits in two subcomplexes, the base and the lid, which form the portions proximal and distal to the 20S proteolytic core, respectively.

It localises to the cytoplasm. It is found in the nucleus. The 26S proteasome is involved in the ATP-dependent degradation of ubiquitinated proteins. The regulatory (or ATPase) complex confers ATP dependency and substrate specificity to the 26S complex. The polypeptide is 26S proteasome regulatory subunit 6A homolog B (RPT5B) (Arabidopsis thaliana (Mouse-ear cress)).